The sequence spans 82 residues: Musculoskeletal embryonic nuclear protein 1 (82 aa).

Positions 1–34 (MSQAGAQEAPIKKKRPPVKEEDLKGARGNLTKNQ) are disordered. Ser-2 is subject to Phosphoserine. A Nuclear localization signal motif is present at residues 10–18 (PIKKKRPPV).

Belongs to the MUSTN1 family.

The protein localises to the nucleus. Its subcellular location is the cytoplasm. The protein resides in the secreted. It is found in the extracellular space. In terms of biological role, required for chondrocyte development and proliferation. Plays a role in myoblast differentiation and fusion. Modulates skeletal muscle extracellular matrix composition. Plays a role in skeletal muscle function. Plays a role in glucose homeostasis. This chain is Musculoskeletal embryonic nuclear protein 1 (MUSTN1), found in Bos taurus (Bovine).